A 963-amino-acid chain; its full sequence is Aminopeptidase N (963 aa).

Residues 2-8 lie on the Cytoplasmic side of the membrane; sequence AKGFYIS. Residues 9–32 traverse the membrane as a helical; Signal-anchor for type II membrane protein segment; it reads KALGILGILLGVAAVATIIALSVV. A cytosolic Ser/Thr-rich junction region spans residues 33-64; that stretch reads YAQEKNKNAEHVPQAPTSPTITTTAAITLDQS. Residues 33 to 963 lie on the Extracellular side of the membrane; the sequence is YAQEKNKNAE…VVLNWFIEHS (931 aa). The metalloprotease stretch occupies residues 65–963; it reads KPWNRYRLPT…VVLNWFIEHS (899 aa). N-linked (GlcNAc...) asparagine glycans are attached at residues N82 and N124. Y171 carries the post-translational modification Sulfotyrosine. 6 N-linked (GlcNAc...) asparagine glycosylation sites follow: N229, N237, N258, N286, N314, and N328. 347–351 is a substrate binding site; it reads GAMEN. Position 383 (H383) interacts with Zn(2+). E384 functions as the Proton acceptor in the catalytic mechanism. H387 and E406 together coordinate Zn(2+). Residues N506, N556, N569, N622, N646, and N736 are each glycosylated (N-linked (GlcNAc...) asparagine). Residues 717–813 are interaction with TGEV spike glycoprotein; the sequence is KYLRKQVEPL…DQWDFAWGQL (97 aa). Cystine bridges form between C758/C765 and C795/C831.

Belongs to the peptidase M1 family. As to quaternary structure, homodimer. Interacts with SLC6A19. In terms of assembly, (Microbial infection) Interacts with TGEV and PRCoV spike glycoprotein. Zn(2+) is required as a cofactor. Post-translationally, sulfated. In terms of processing, N- and O-glycosylated. May undergo proteolysis and give rise to a soluble form.

Its subcellular location is the cell membrane. It catalyses the reaction Release of an N-terminal amino acid, Xaa-|-Yaa- from a peptide, amide or arylamide. Xaa is preferably Ala, but may be most amino acids including Pro (slow action). When a terminal hydrophobic residue is followed by a prolyl residue, the two may be released as an intact Xaa-Pro dipeptide.. Broad specificity aminopeptidase which plays a role in the final digestion of peptides generated from hydrolysis of proteins by gastric and pancreatic proteases. Also involved in the processing of various peptides including peptide hormones, such as angiotensin III and IV, neuropeptides, and chemokines. May also be involved the cleavage of peptides bound to major histocompatibility complex class II molecules of antigen presenting cells. May have a role in angiogenesis and promote cholesterol crystallization. It is able to degrade Leu-enkephalin and Met-enkephalin but not cholecystokinin CCK8, neuromedin C (GRP-10), somatostatin-14, substance P and vasoactive intestinal peptide. May have a role in amino acid transport by acting as binding partner of amino acid transporter SLC6A19 and regulating its activity. Functionally, (Microbial infection) In case of porcine transmissible gastroenteritis coronavirus (TGEV) and porcine respiratory coronavirus (PRCoV) infections, serves as a receptor for TGEV and PRCoV spike glycoprotein in a species-specific manner. The sequence is that of Aminopeptidase N (ANPEP) from Sus scrofa (Pig).